Consider the following 526-residue polypeptide: GMP synthase [glutamine-hydrolyzing] (526 aa).

A Glutamine amidotransferase type-1 domain is found at 3–199 (RVAIIDFGSQ…FVRIAGCDNN (197 aa)). Cysteine 83 acts as the Nucleophile in catalysis. Catalysis depends on residues histidine 174 and glutamate 176. A GMPS ATP-PPase domain is found at 200–392 (WTVESFLDEQ…LGISDEILMR (193 aa)). 227 to 233 (SGGVDSS) contributes to the ATP binding site.

In terms of assembly, homodimer.

It catalyses the reaction XMP + L-glutamine + ATP + H2O = GMP + L-glutamate + AMP + diphosphate + 2 H(+). The protein operates within purine metabolism; GMP biosynthesis; GMP from XMP (L-Gln route): step 1/1. In terms of biological role, catalyzes the synthesis of GMP from XMP. This is GMP synthase [glutamine-hydrolyzing] from Ehrlichia chaffeensis (strain ATCC CRL-10679 / Arkansas).